We begin with the raw amino-acid sequence, 95 residues long: MIRSELIAKIAEENPHLFQRDVEKIVNTIFEEIIEAMARGDRVELRGFGAFSVKKRDARTGRNPRTGTSVAVDEKHVPFFKTGKLLRDRLNGGEE.

This sequence belongs to the bacterial histone-like protein family. As to quaternary structure, heterodimer of an alpha and a beta chain.

Functionally, this protein is one of the two subunits of integration host factor, a specific DNA-binding protein that functions in genetic recombination as well as in transcriptional and translational control. Involved in hydrogenase gene expression. This Rhodobacter capsulatus (Rhodopseudomonas capsulata) protein is Integration host factor subunit beta (ihfB).